The chain runs to 251 residues: HTH-type transcriptional regulator UlaR (251 aa).

Residues 3-58 (EAQRHQILLEMLAQLGFVTVEKVVERLGISPATARRDINKLDESGKLKKVRNGAEA) enclose the HTH deoR-type domain. A DNA-binding region (H-T-H motif) is located at residues 20-39 (VTVEKVVERLGISPATARRD).

Its subcellular location is the cytoplasm. Functionally, represses ulaG and the ulaABCDEF operon. The chain is HTH-type transcriptional regulator UlaR from Escherichia coli O139:H28 (strain E24377A / ETEC).